The primary structure comprises 128 residues: Sulfurtransferase TusD (128 aa).

Cys-78 serves as the catalytic Cysteine persulfide intermediate.

This sequence belongs to the DsrE/TusD family. Heterohexamer, formed by a dimer of trimers. The hexameric TusBCD complex contains 2 copies each of TusB, TusC and TusD. The TusBCD complex interacts with TusE.

The protein localises to the cytoplasm. In terms of biological role, part of a sulfur-relay system required for 2-thiolation of 5-methylaminomethyl-2-thiouridine (mnm(5)s(2)U) at tRNA wobble positions. Accepts sulfur from TusA and transfers it in turn to TusE. This is Sulfurtransferase TusD from Escherichia coli (strain K12 / MC4100 / BW2952).